The sequence spans 273 residues: Type III pantothenate kinase (273 aa).

Position 5–12 (5–12) interacts with ATP; that stretch reads DVGNSHVV. Residue 112–115 participates in substrate binding; the sequence is GTDL. Asp-114 functions as the Proton acceptor in the catalytic mechanism. Asp-134 is a K(+) binding site. Thr-137 provides a ligand contact to ATP. Thr-189 is a substrate binding site.

This sequence belongs to the type III pantothenate kinase family. As to quaternary structure, homodimer. Requires NH4(+) as cofactor. K(+) is required as a cofactor.

Its subcellular location is the cytoplasm. It carries out the reaction (R)-pantothenate + ATP = (R)-4'-phosphopantothenate + ADP + H(+). It participates in cofactor biosynthesis; coenzyme A biosynthesis; CoA from (R)-pantothenate: step 1/5. Catalyzes the phosphorylation of pantothenate (Pan), the first step in CoA biosynthesis. This chain is Type III pantothenate kinase, found in Treponema pallidum (strain Nichols).